The following is a 369-amino-acid chain: MSDLPAVVVGLSGGVDSSVAIASLKAQGHPVVGLTLWLMKGKGQCCSEGLVDAARLCEQLGVPHHIVDSREIFEKYIVNYLISGYANGVTPLPCSQCNRLVKFGPMLAYSREQLGIDYIATGHYAQVKYNPTSDRYELWRAVDRHKDQSYFLYDLPQEILAHVLFPLGQQTKAETRALAAQYGLPTASKPESQDLCLIEAHGSMRQFLDQYLPRQQGEIVDVYGRVLGYHQGIHHYTIGQRKGLGIAAPEPLYVVALDREHNRVIVGDRATAGRRECTVARVNWVSIPPPKEPMTATVQIRYRTPPVPVTIIPDANAEQVQLEFAEPQFGVTPGQAAVWYAGDRLLGGGIIQPFGTPTLHPLEATATHV.

Residues 10–17 and L36 each bind ATP; that span reads GLSGGVDS. C97 functions as the Nucleophile in the catalytic mechanism. C97 and C196 form a disulfide bridge. G122 contributes to the ATP binding site. The interval 146 to 148 is interaction with tRNA; that stretch reads KDQ. C196 functions as the Cysteine persulfide intermediate in the catalytic mechanism. An interaction with tRNA region spans residues 301–302; the sequence is RY.

This sequence belongs to the MnmA/TRMU family.

The protein localises to the cytoplasm. It catalyses the reaction S-sulfanyl-L-cysteinyl-[protein] + uridine(34) in tRNA + AH2 + ATP = 2-thiouridine(34) in tRNA + L-cysteinyl-[protein] + A + AMP + diphosphate + H(+). Functionally, catalyzes the 2-thiolation of uridine at the wobble position (U34) of tRNA, leading to the formation of s(2)U34. This Thermosynechococcus vestitus (strain NIES-2133 / IAM M-273 / BP-1) protein is tRNA-specific 2-thiouridylase MnmA.